Reading from the N-terminus, the 121-residue chain is Large ribosomal subunit protein bL12 (121 aa).

This sequence belongs to the bacterial ribosomal protein bL12 family. In terms of assembly, homodimer. Part of the ribosomal stalk of the 50S ribosomal subunit. Forms a multimeric L10(L12)X complex, where L10 forms an elongated spine to which 2 to 4 L12 dimers bind in a sequential fashion. Binds GTP-bound translation factors.

Forms part of the ribosomal stalk which helps the ribosome interact with GTP-bound translation factors. Is thus essential for accurate translation. This is Large ribosomal subunit protein bL12 from Lactococcus lactis subsp. lactis (strain IL1403) (Streptococcus lactis).